Here is a 448-residue protein sequence, read N- to C-terminus: MIHGKTLAEWQQSHPEIRELTGLRECAWFNPAAAPAAEALPDVGLGAADIADASARLRRFAPYISRAFPETAASGGIIESPLLPVPAFQQALARRRGRELPGRLWLKADSHLPISGSIKARGGIYEVLKHAEDLALANGLLQPGDDYARLASPEARSLFSRHGIAVGSTGNLGLSIGIMAAKLGFQAAVHMSADARQWKKDKLRAHGVTVVEYQTDYSAAVARGREQAARDPDCHFVDDENSIHLFLGYAVAAERLKAQLAEAGVRVDADHPLFVYLPCGVGGGPGGVAFGLKQAFGDAVHCLFAEPTRSPCMLLGVLTGLHDKVSVQDFGIDNRTVADGLAVGRPSGFVGRAMQRLIDGYYTVDDDELFRLLAMLEQTEGLRLEPSALAGAPGIARVLEENQGYRQRMGLDADRLACATHLIWATGGSMVPEAEMDGYLRRGRALLG.

Lys119 carries the post-translational modification N6-(pyridoxal phosphate)lysine.

It belongs to the serine/threonine dehydratase family. DsdA subfamily. The cofactor is pyridoxal 5'-phosphate.

It carries out the reaction D-serine = pyruvate + NH4(+). In Chromobacterium violaceum (strain ATCC 12472 / DSM 30191 / JCM 1249 / CCUG 213 / NBRC 12614 / NCIMB 9131 / NCTC 9757 / MK), this protein is Probable D-serine dehydratase.